Consider the following 675-residue polypeptide: Protein PALS1 (675 aa).

The interval 1 to 345 (MTTSYMNGHV…QQIKPPPAKE (345 aa)) is required for the correct localization of PALS1 and PATJ at cell-cell contacts and the normal formation of tight junctions and adherens junctions. Phosphoserine occurs at positions 14 and 25. The segment at 21–140 (LDLASPEEYP…LKHIQHTLVD (120 aa)) is interaction with PARD6B. The tract at residues 51 to 79 (RRSAQLERIRQQQEDMRRRREEEGKKQEL) is disordered. The segment covering 54–79 (AQLERIRQQQEDMRRRREEEGKKQEL) has biased composition (basic and acidic residues). Phosphoserine is present on residues Ser-83 and Ser-84. 2 consecutive L27 domains span residues 120-177 (NILD…SKAS) and 179-235 (PFPL…MQLE). Positions 181–243 (PLIANVQDLV…LEPITDERVY (63 aa)) are interaction with LIN7C. One can recognise a PDZ domain in the interval 256-336 (IVRIEKARDI…TLTFVLIPSQ (81 aa)). One can recognise an SH3 domain in the interval 345–417 (ETVIHVKAHF…PGKSFQQQRE (73 aa)). Positions 479–660 (KRPIILIGPQ…AYQELLRLIN (182 aa)) constitute a Guanylate kinase-like domain. Position 486–493 (486–493 (GPQNCGQN)) interacts with ATP.

The protein belongs to the MAGUK family. As to quaternary structure, heterodimer with MPP1. Forms a heterotrimeric complex composed of PALS1, LIN7B and PATJ; the N-terminal L27 domain of PALS1 interacts with the L27 domain of PATJ and the C-terminal L27 domain of PALS1 interacts with the L27 domain of LIN7B. Component of a complex composed of PALS1, CRB1 and MPP4. Component of a complex whose core is composed of ARHGAP17, AMOT, PALS1, PATJ and PARD3/PAR3. Component of a complex composed of PALS1, CRB1 and EPB41L5. Within the complex, interacts (via HOOK domain) with EPB41L5 (via FERM domain), and interacts with CRB1 (via intracellular domain). Component of a complex composed of PALS1, MPP3 and CRB1; PALS1 acts as a bridging protein between MPP3 (via guanylate kinase-like domain) and CRB1. Component of a complex composed of CRB3, PALS1 and PATJ. As part of the Crumbs complex; interacts with WWP1, the interaction is enhanced by AMOTL2 and facilitates WWP1 localization to the plasma membrane. The Crumbs complex promotes monoubiquitination of AMOTL2 by WWP1, which activates the Hippo signaling pathway. Interacts (via PDZ domain) with PATJ (via N-terminus). Interacts with EZR. Interacts (via PDZ domain) with CRB1 (via C-terminal ERLI motif). While the PDZ domain is sufficient for interaction with CRB1, the adjacent SH3 and guanylate kinase-like domains are likely to contribute to a high affinity interaction. Interacts with WWTR1/TAZ (via WW domain). Interacts with MPP7. Interacts (via PDZ domain) with CRB3 (via C-terminus). Interacts with LIN7C. Interacts with MPDZ. Interacts with PARD6B. Interacts with SC6A1. Interacts with CDH5; the interaction promotes PALS1 localization to cell junctions and is required for CDH5-mediated vascular lumen formation and endothelial cell. Interacts with NPHP1 (via coiled coil and SH3 domains). Interacts with NPHP4. Interacts with CRB2. Expressed in the retinal pigment epithelium (at protein level). Expressed in the vascular plexus of the retina (at protein level). In the brain, expressed in the dentate gyrus of hippocampus, striatum and cerebellum (at protein level). Expressed in the sciatic nerve (at protein level). Expressed in the kidney nephron (at protein level). Expressed in the lung, and heart. Expressed in placenta, brain, skeletal muscles, pancreas and liver.

The protein localises to the golgi apparatus. Its subcellular location is the cell membrane. The protein resides in the endomembrane system. It is found in the cell junction. It localises to the tight junction. The protein localises to the adherens junction. Its subcellular location is the cell projection. The protein resides in the axon. It is found in the perikaryon. It localises to the apical cell membrane. Plays a role in tight junction biogenesis and in the establishment of cell polarity in epithelial cells. Also involved in adherens junction biogenesis by ensuring correct localization of the exocyst complex protein EXOC4/SEC8 which allows trafficking of adherens junction structural component CDH1 to the cell surface. Plays a role through its interaction with CDH5 in vascular lumen formation and endothelial membrane polarity. Required during embryonic and postnatal retinal development. Required for the maintenance of cerebellar progenitor cells in an undifferentiated proliferative state, preventing premature differentiation, and is required for cerebellar histogenesis, fissure formation, cerebellar layer organization and cortical development. Plays a role in neuronal progenitor cell survival, potentially via promotion of mTOR signaling. Plays a role in the radial and longitudinal extension of the myelin sheath in Schwann cells. May modulate SC6A1/GAT1-mediated GABA uptake by stabilizing the transporter. May play a role in the T-cell receptor-mediated activation of NF-kappa-B. Required for localization of EZR to the apical membrane of parietal cells and may play a role in the dynamic remodeling of the apical cytoskeleton. Required for the normal polarized localization of the vesicular marker STX4. Required for the correct trafficking of the myelin proteins PMP22 and MAG. Involved in promoting phosphorylation and cytoplasmic retention of transcriptional coactivators YAP1 and WWTR1/TAZ which leads to suppression of TGFB1-dependent transcription of target genes such as CCN2/CTGF, SERPINE1/PAI1, SNAI1/SNAIL1 and SMAD7. The sequence is that of Protein PALS1 from Mus musculus (Mouse).